Consider the following 122-residue polypeptide: uncharacterized protein (122 aa).

Residues 1-18 form the signal peptide; that stretch reads MYSMAFLASSGLVANSSA. Asn15 carries N-linked (GlcNAc...) asparagine glycosylation.

This is an uncharacterized protein from Saccharomyces cerevisiae (strain ATCC 204508 / S288c) (Baker's yeast).